The sequence spans 351 residues: Phosphoribosylformylglycinamidine cyclo-ligase (351 aa).

The protein belongs to the AIR synthase family.

It localises to the cytoplasm. The catalysed reaction is 2-formamido-N(1)-(5-O-phospho-beta-D-ribosyl)acetamidine + ATP = 5-amino-1-(5-phospho-beta-D-ribosyl)imidazole + ADP + phosphate + H(+). Its pathway is purine metabolism; IMP biosynthesis via de novo pathway; 5-amino-1-(5-phospho-D-ribosyl)imidazole from N(2)-formyl-N(1)-(5-phospho-D-ribosyl)glycinamide: step 2/2. This is Phosphoribosylformylglycinamidine cyclo-ligase from Burkholderia vietnamiensis (strain G4 / LMG 22486) (Burkholderia cepacia (strain R1808)).